We begin with the raw amino-acid sequence, 72 residues long: Translation initiation factor IF-1 (72 aa).

The region spanning 1–72 (MAKEDCIEME…TKGRIKFRSK (72 aa)) is the S1-like domain.

It belongs to the IF-1 family. As to quaternary structure, component of the 30S ribosomal translation pre-initiation complex which assembles on the 30S ribosome in the order IF-2 and IF-3, IF-1 and N-formylmethionyl-tRNA(fMet); mRNA recruitment can occur at any time during PIC assembly.

It localises to the cytoplasm. Functionally, one of the essential components for the initiation of protein synthesis. Stabilizes the binding of IF-2 and IF-3 on the 30S subunit to which N-formylmethionyl-tRNA(fMet) subsequently binds. Helps modulate mRNA selection, yielding the 30S pre-initiation complex (PIC). Upon addition of the 50S ribosomal subunit IF-1, IF-2 and IF-3 are released leaving the mature 70S translation initiation complex. In Francisella tularensis subsp. tularensis (strain WY96-3418), this protein is Translation initiation factor IF-1.